A 907-amino-acid polypeptide reads, in one-letter code: Lipoxygenase 1, chloroplastic (907 aa).

Residues 1–49 (MALAKQIMGASLMDQKTSVFGSNLCLNHVLVNKHRLRLRKTRKNGSMVV) constitute a chloroplast transit peptide. A PLAT domain is found at 85 to 209 (DFFKDTIFRK…DLPNPRIFFT (125 aa)). Positions 212–907 (PYLPDETPVG…CRGVPNSISI (696 aa)) constitute a Lipoxygenase domain. Positions 567, 572, 758, 762, and 907 each coordinate Fe cation.

Belongs to the lipoxygenase family. Requires Fe cation as cofactor. As to expression, confined to glandular trichomes in flowers, and, at low levels, in leaves.

It localises to the plastid. It is found in the chloroplast. The enzyme catalyses (9Z,12Z,15Z)-octadecatrienoate + O2 = 13-hydroperoxy-(9Z,11E,15Z)-octadecatrienoate. It functions in the pathway lipid metabolism; oxylipin biosynthesis. Its pathway is isoprenoid biosynthesis. Component of the monoterpenoid pyrethrins biosynthesis; pyrethrins are widely used plant-derived pesticide. Plant lipoxygenases may be involved in a number of diverse aspects of plant physiology including growth and development, pest resistance, and senescence or responses to wounding. Catalyzes the hydroperoxidation of lipids containing a cis,cis-1,4-pentadiene structure. Mediates the peroxidation of linolenic acid leading to the production of 13-hydroperoxylinolenic acid. The protein is Lipoxygenase 1, chloroplastic of Tanacetum cinerariifolium (Dalmatian daisy).